The primary structure comprises 232 residues: Sugar fermentation stimulation protein homolog (232 aa).

It belongs to the SfsA family.

In Ruegeria sp. (strain TM1040) (Silicibacter sp.), this protein is Sugar fermentation stimulation protein homolog.